A 201-amino-acid chain; its full sequence is 3-isopropylmalate dehydratase small subunit (201 aa).

Belongs to the LeuD family. LeuD type 1 subfamily. In terms of assembly, heterodimer of LeuC and LeuD.

It catalyses the reaction (2R,3S)-3-isopropylmalate = (2S)-2-isopropylmalate. The protein operates within amino-acid biosynthesis; L-leucine biosynthesis; L-leucine from 3-methyl-2-oxobutanoate: step 2/4. Its function is as follows. Catalyzes the isomerization between 2-isopropylmalate and 3-isopropylmalate, via the formation of 2-isopropylmaleate. The sequence is that of 3-isopropylmalate dehydratase small subunit from Pasteurella multocida (strain Pm70).